We begin with the raw amino-acid sequence, 321 residues long: Probable GDP-L-fucose synthase (321 aa).

Residue 8-14 (GGTGLVG) participates in NADP(+) binding. Tyr136 acts as the Proton donor/acceptor in catalysis. Residues Lys140, 163–166 (PCNI), and His179 contribute to the NADP(+) site. Substrate contacts are provided by Arg187, Arg215, and Asp277.

The protein belongs to the NAD(P)-dependent epimerase/dehydratase family. Fucose synthase subfamily. Homodimer.

The catalysed reaction is GDP-beta-L-fucose + NADP(+) = GDP-4-dehydro-alpha-D-rhamnose + NADPH + H(+). It functions in the pathway nucleotide-sugar biosynthesis; GDP-L-fucose biosynthesis via de novo pathway; GDP-L-fucose from GDP-alpha-D-mannose: step 2/2. Its function is as follows. Catalyzes the two-step NADP-dependent conversion of GDP-4-dehydro-6-deoxy-D-mannose to GDP-fucose, involving an epimerase and a reductase reaction. The protein is Probable GDP-L-fucose synthase (Gmer) of Drosophila melanogaster (Fruit fly).